A 138-amino-acid chain; its full sequence is Putative nickel-responsive regulator (138 aa).

Positions 78, 89, 91, and 97 each coordinate Ni(2+).

The protein belongs to the transcriptional regulatory CopG/NikR family. The cofactor is Ni(2+).

Its function is as follows. Transcriptional regulator. The sequence is that of Putative nickel-responsive regulator from Pyrococcus horikoshii (strain ATCC 700860 / DSM 12428 / JCM 9974 / NBRC 100139 / OT-3).